Here is a 214-residue protein sequence, read N- to C-terminus: MKEERNYNFDGVSTNRLKQQLLEEVRKKDAVQLSIFELRHKITELEAKLNTDNEGSEWKTRYETQLELNDELEKQIVYLKEKVEKIHGNSSDRLSSIRVYERMPVESLNTLLKQLEEEKKTLESQVKYYALKLEQESKAYQKINNERRTYLAEMSQGSGLHQVSKRQQVDQLPRMQENLVKTGRYNPAKQKTVSAKRGPVKKITRPNHLPELHP.

Positions 29 to 154 form a coiled coil; that stretch reads DAVQLSIFEL…NERRTYLAEM (126 aa). Residues 155 to 170 show a composition bias toward polar residues; it reads SQGSGLHQVSKRQQVD. Positions 155–214 are disordered; that stretch reads SQGSGLHQVSKRQQVDQLPRMQENLVKTGRYNPAKQKTVSAKRGPVKKITRPNHLPELHP.

The protein belongs to the CCDC169 family.

This Homo sapiens (Human) protein is Coiled-coil domain-containing protein 169 (CCDC169).